A 907-amino-acid chain; its full sequence is Protein translocase subunit SecA (907 aa).

ATP-binding positions include Gln87, Gly105–Thr109, and Asp512. The segment at Ala870–Lys897 is disordered. The Zn(2+) site is built by Cys891, Cys893, Cys902, and His903.

It belongs to the SecA family. Monomer and homodimer. Part of the essential Sec protein translocation apparatus which comprises SecA, SecYEG and auxiliary proteins SecDF-YajC and YidC. It depends on Zn(2+) as a cofactor.

It is found in the cell inner membrane. Its subcellular location is the cytoplasm. It catalyses the reaction ATP + H2O + cellular proteinSide 1 = ADP + phosphate + cellular proteinSide 2.. In terms of biological role, part of the Sec protein translocase complex. Interacts with the SecYEG preprotein conducting channel. Has a central role in coupling the hydrolysis of ATP to the transfer of proteins into and across the cell membrane, serving both as a receptor for the preprotein-SecB complex and as an ATP-driven molecular motor driving the stepwise translocation of polypeptide chains across the membrane. This is Protein translocase subunit SecA from Shewanella piezotolerans (strain WP3 / JCM 13877).